The following is a 293-amino-acid chain: Amine sulfotransferase (293 aa).

Position 46–51 (46–51 (KSGTIW)) interacts with 3'-phosphoadenylyl sulfate. His-101 functions as the Proton acceptor in the catalytic mechanism. 3'-phosphoadenylyl sulfate is bound by residues Arg-123, Ser-131, 220-225 (ATFQKM), and 252-254 (RKG).

This sequence belongs to the sulfotransferase 1 family.

It localises to the cytoplasm. It carries out the reaction a primary amine + 3'-phosphoadenylyl sulfate = a sulfamate + adenosine 3',5'-bisphosphate + 2 H(+). Sulfotransferase that utilizes 3'-phospho-5'-adenylyl sulfate (PAPS) as sulfonate donor to catalyze the N-sulfonation of amines. The sequence is that of Amine sulfotransferase (Sult3a1) from Mus musculus (Mouse).